The primary structure comprises 734 residues: Ribosomal RNA large subunit methyltransferase K/L (734 aa).

The THUMP domain maps to 49–167; it reads HAYRICMWSR…KTEHTYCLDL (119 aa).

The protein belongs to the methyltransferase superfamily. RlmKL family.

Its subcellular location is the cytoplasm. It carries out the reaction guanosine(2445) in 23S rRNA + S-adenosyl-L-methionine = N(2)-methylguanosine(2445) in 23S rRNA + S-adenosyl-L-homocysteine + H(+). The enzyme catalyses guanosine(2069) in 23S rRNA + S-adenosyl-L-methionine = N(2)-methylguanosine(2069) in 23S rRNA + S-adenosyl-L-homocysteine + H(+). Specifically methylates the guanine in position 2445 (m2G2445) and the guanine in position 2069 (m7G2069) of 23S rRNA. The sequence is that of Ribosomal RNA large subunit methyltransferase K/L from Acinetobacter baumannii (strain SDF).